We begin with the raw amino-acid sequence, 435 residues long: 3-phosphoshikimate 1-carboxyvinyltransferase (435 aa).

3 residues coordinate 3-phosphoshikimate: Lys22, Ser23, and Arg27. Residue Lys22 coordinates phosphoenolpyruvate. Positions 95 and 123 each coordinate phosphoenolpyruvate. 3-phosphoshikimate is bound by residues Ser168, Gln170, Asp319, and Lys346. Gln170 serves as a coordination point for phosphoenolpyruvate. Residue Asp319 is the Proton acceptor of the active site. Arg350 and Arg393 together coordinate phosphoenolpyruvate.

This sequence belongs to the EPSP synthase family. Monomer.

The protein localises to the cytoplasm. The catalysed reaction is 3-phosphoshikimate + phosphoenolpyruvate = 5-O-(1-carboxyvinyl)-3-phosphoshikimate + phosphate. The protein operates within metabolic intermediate biosynthesis; chorismate biosynthesis; chorismate from D-erythrose 4-phosphate and phosphoenolpyruvate: step 6/7. Functionally, catalyzes the transfer of the enolpyruvyl moiety of phosphoenolpyruvate (PEP) to the 5-hydroxyl of shikimate-3-phosphate (S3P) to produce enolpyruvyl shikimate-3-phosphate and inorganic phosphate. The protein is 3-phosphoshikimate 1-carboxyvinyltransferase of Chloroflexus aurantiacus (strain ATCC 29364 / DSM 637 / Y-400-fl).